Consider the following 160-residue polypeptide: Transcription antitermination protein NusB (160 aa).

It belongs to the NusB family.

Its function is as follows. Involved in transcription antitermination. Required for transcription of ribosomal RNA (rRNA) genes. Binds specifically to the boxA antiterminator sequence of the ribosomal RNA (rrn) operons. The sequence is that of Transcription antitermination protein NusB from Rhizobium johnstonii (strain DSM 114642 / LMG 32736 / 3841) (Rhizobium leguminosarum bv. viciae).